Consider the following 584-residue polypeptide: ATP-dependent lipid A-core flippase (584 aa).

Helical transmembrane passes span leucine 15 to valine 35, isoleucine 63 to isoleucine 83, leucine 153 to valine 173, threonine 251 to leucine 271, and glycine 277 to valine 297. An ABC transmembrane type-1 domain is found at leucine 27–arginine 309. Residues leucine 341 to leucine 576 enclose the ABC transporter domain. Glycine 375 to threonine 382 is a binding site for ATP.

It belongs to the ABC transporter superfamily. Lipid exporter (TC 3.A.1.106) family. As to quaternary structure, homodimer.

The protein localises to the cell inner membrane. The catalysed reaction is ATP + H2O + lipid A-core oligosaccharideSide 1 = ADP + phosphate + lipid A-core oligosaccharideSide 2.. Involved in lipopolysaccharide (LPS) biosynthesis. Translocates lipid A-core from the inner to the outer leaflet of the inner membrane. Transmembrane domains (TMD) form a pore in the inner membrane and the ATP-binding domain (NBD) is responsible for energy generation. This Chromobacterium violaceum (strain ATCC 12472 / DSM 30191 / JCM 1249 / CCUG 213 / NBRC 12614 / NCIMB 9131 / NCTC 9757 / MK) protein is ATP-dependent lipid A-core flippase.